Here is a 63-residue protein sequence, read N- to C-terminus: Large ribosomal subunit protein bL28 (63 aa).

This sequence belongs to the bacterial ribosomal protein bL28 family.

In Symbiobacterium thermophilum (strain DSM 24528 / JCM 14929 / IAM 14863 / T), this protein is Large ribosomal subunit protein bL28.